The chain runs to 147 residues: Hemoglobin subunit beta-3 (147 aa).

Positions 2 to 147 constitute a Globin domain; sequence EWTDAERTAI…VTSALSRQYH (146 aa). 2 residues coordinate heme b: His63 and His92.

The protein belongs to the globin family. As to quaternary structure, heterotetramer of two alpha chains and two beta chains. Red blood cells.

Its function is as follows. Involved in oxygen transport from gills to the various peripheral tissues. The sequence is that of Hemoglobin subunit beta-3 (hbb3) from Muraena helena (Mediterranean moray).